Here is a 468-residue protein sequence, read N- to C-terminus: uncharacterized protein (468 aa).

The next 6 membrane-spanning stretches (helical) occupy residues 59–79 (IPIV…ALFI), 135–155 (TWIN…LLLV), 215–235 (VFPF…LSIL), 297–317 (THCC…MVLV), 348–368 (HFIP…LVSY), and 385–405 (VFTV…IILF).

Its subcellular location is the membrane. This is an uncharacterized protein from Caenorhabditis elegans.